A 264-amino-acid chain; its full sequence is Thiazole synthase (264 aa).

Lysine 106 functions as the Schiff-base intermediate with DXP in the catalytic mechanism. 1-deoxy-D-xylulose 5-phosphate is bound by residues glycine 167, 193-194 (AG), and 215-216 (NT).

It belongs to the ThiG family. Homotetramer. Forms heterodimers with either ThiH or ThiS.

Its subcellular location is the cytoplasm. The catalysed reaction is [ThiS sulfur-carrier protein]-C-terminal-Gly-aminoethanethioate + 2-iminoacetate + 1-deoxy-D-xylulose 5-phosphate = [ThiS sulfur-carrier protein]-C-terminal Gly-Gly + 2-[(2R,5Z)-2-carboxy-4-methylthiazol-5(2H)-ylidene]ethyl phosphate + 2 H2O + H(+). The protein operates within cofactor biosynthesis; thiamine diphosphate biosynthesis. Catalyzes the rearrangement of 1-deoxy-D-xylulose 5-phosphate (DXP) to produce the thiazole phosphate moiety of thiamine. Sulfur is provided by the thiocarboxylate moiety of the carrier protein ThiS. In vitro, sulfur can be provided by H(2)S. The polypeptide is Thiazole synthase (Thioalkalivibrio sulfidiphilus (strain HL-EbGR7)).